The following is a 316-amino-acid chain: MNTITTTNFNFPNQKSVYRGKVREVYNINDELLVMVATDRLSAFDVVLPEGIPYKGQILNQIATKFMELTQDIVPNWLIATPDPNVAVGHLCEPFKVEMVIRGYLSGHAAREYALGKRTICGVTMPEGLKENDQFPTPIITPTTKADNGSHDEDISRSAILAKNIVSEQDYLVLEKYTRDLYQRGTEIAASRGLILVDTKYEFGKTKDGKIVLIDEIHTPDSSRYFYAEGYQDRQNNEEEQKQLSKEFVRRWLIENGFQGQDGQEIPEMNQEYITSVSERYIELYENILGEKFVKADISSINDRIEKNVLEYLQNK.

The protein belongs to the SAICAR synthetase family.

The enzyme catalyses 5-amino-1-(5-phospho-D-ribosyl)imidazole-4-carboxylate + L-aspartate + ATP = (2S)-2-[5-amino-1-(5-phospho-beta-D-ribosyl)imidazole-4-carboxamido]succinate + ADP + phosphate + 2 H(+). It functions in the pathway purine metabolism; IMP biosynthesis via de novo pathway; 5-amino-1-(5-phospho-D-ribosyl)imidazole-4-carboxamide from 5-amino-1-(5-phospho-D-ribosyl)imidazole-4-carboxylate: step 1/2. This Flavobacterium psychrophilum (strain ATCC 49511 / DSM 21280 / CIP 103535 / JIP02/86) protein is Phosphoribosylaminoimidazole-succinocarboxamide synthase.